We begin with the raw amino-acid sequence, 636 residues long: Polyadenylate-binding protein 1 (636 aa).

The residue at position 1 (Met-1) is an N-acetylmethionine. RRM domains lie at 11 to 89 (ASLY…WSQR), 99 to 175 (GNIF…RFKS), 191 to 268 (TNVY…RAQK), and 294 to 370 (VNLY…LAQR). Residues 166–289 (RKVFVGRFKS…FEQMKQDRIT (124 aa)) are UNR-binding. Position 299 is an N6-methyllysine (Lys-299). Ser-315 is subject to Phosphoserine. Thr-319 carries the phosphothreonine modification. An omega-N-methylarginine mark is found at Arg-385, Arg-419, Arg-432, and Arg-436. An omega-N-methylated arginine; by CARM1 mark is found at Arg-455 and Arg-460. Omega-N-methylarginine occurs at positions 475 and 481. Residue Arg-493 is modified to Asymmetric dimethylarginine; alternate. Residue Arg-493 is modified to Dimethylated arginine; alternate. The residue at position 493 (Arg-493) is an Omega-N-methylarginine; alternate. Arg-506 bears the Omega-N-methylarginine mark. Lys-512 carries the N6-acetyllysine modification. Arg-518 bears the Omega-N-methylarginine mark. The PABC domain occupies 542–619 (QEPLTASMLA…AVAVLQAHQA (78 aa)).

This sequence belongs to the polyadenylate-binding protein type-1 family. In terms of assembly, may form homodimers. Component of a multisubunit autoregulatory ribonucleoprotein complex (ARC), at least composed of IGF2BP1, PABPC1 and CSDE1. Directly interacts with IGF2BP1. Part of a complex associated with the FOS mCRD domain and consisting of HNRPD, SYNCRIP, PAIP1 and CSDE1/UNR. Interacts with PAIP1 and PAIP2 (via the PABPC1-interacting motifs PAM1 and PAM2). Interacts with PAIP1 with a 1:1 stoichiometry and with PAIP2 with a 1:2 stoichiometry. The interaction with CSDE1 is direct and RNA-independent. Found in a mRNP complex with YBX2. Interacts with TENT2/GLD2. Identified in the spliceosome C complex. Identified in a mRNP complex, at least composed of DHX9, DDX3X, ELAVL1, HNRNPU, IGF2BP1, ILF3, PABPC1, PCBP2, PTBP2, STAU1, STAU2, SYNCRIP and YBX1. The interaction with DDX3X is direct and RNA-independent. This interaction increases in stressed cells and decreases during cell recovery. Identified in a IGF2BP1-dependent mRNP granule complex containing untranslated mRNAs. Interacts with NXF1/TAP. Interacts with PIWIL1. Interacts with AGO1, AGO2, GSPT1 and GSPT2. Interacts with LARP4B. Interacts (via the second and third RRM domains and the C-terminus) with PAIP2B (via central acidic portion and C-terminus). Forms a complex with LARP1 and SHFL. Interacts with LARP4. Interacts with ZFC3H1 in a RNase-sensitive manner. Interacts with TRIM71 (via NHL repeats) in an RNA-dependent manner. Interacts with TENT5C; the interaction has no effect on TENT5C poly(A) polymerase function. Interacts with G3BP1 and G3BP2. Interacts with ENDOV; the interaction is RNA-dependent and stimulates ENDOV activity. Interacts with UPF1; the interaction is RNA-dependent. Interacts with IGF2BP2 and IGF2BP3. May interact with SETX. Interacts with RBM46. Interacts with PAN3 isoform 1/Pan3L and isoform 3/Pan3S (via N-terminus); interaction with isoform 1 is less efficient than with isoform 3. In terms of processing, phosphorylated by MAPKAPK2. Post-translationally, methylated by CARM1. Arg-493 is dimethylated, probably to asymmetric dimethylarginine.

It is found in the cytoplasm. The protein localises to the stress granule. Its subcellular location is the nucleus. It localises to the cell projection. The protein resides in the lamellipodium. Its function is as follows. Binds the poly(A) tail of mRNA, including that of its own transcript, and regulates processes of mRNA metabolism such as pre-mRNA splicing and mRNA stability. Its function in translational initiation regulation can either be enhanced by PAIP1 or repressed by PAIP2. Can probably bind to cytoplasmic RNA sequences other than poly(A) in vivo. Binds to N6-methyladenosine (m6A)-containing mRNAs and contributes to MYC stability by binding to m6A-containing MYC mRNAs. Involved in translationally coupled mRNA turnover. Implicated with other RNA-binding proteins in the cytoplasmic deadenylation/translational and decay interplay of the FOS mRNA mediated by the major coding-region determinant of instability (mCRD) domain. Involved in regulation of nonsense-mediated decay (NMD) of mRNAs containing premature stop codons; for the recognition of premature termination codons (PTC) and initiation of NMD a competitive interaction between UPF1 and PABPC1 with the ribosome-bound release factors is proposed. By binding to long poly(A) tails, may protect them from uridylation by ZCCHC6/ZCCHC11 and hence contribute to mRNA stability. This is Polyadenylate-binding protein 1 (Pabpc1) from Rattus norvegicus (Rat).